The sequence spans 449 residues: MPGDVEGCQHLKLKPADVENYQKICTQIFSCHFVPRRCSTCKRINKRSIRCLSCHSVGCLWGHHGEEHAMEHTHMIGVDVKNGHTYCFGCQDYVYQTELETLRFKIKNIKAWQSDHKRLPEKYNQMVCLEAYRKYPPVCATAGLRGIQNLGATCFMSVILQSILHNPLVRNLFFSGFHTSTDCKRPTCMTCAIDDMFSSIYNSKNKSTFYGPTAVLNLMWKLSKSLCGYSQQDGHEFFVYLLDQMHTESGGGTSMPCTCPIHRIFSGSLKNVVTCLDCKKERVAVDPLMDISLDINEPTLQGCLERFVSKEKVQYSCHSCGSKNAIKQLVFDKLPPTICMQLKRFEQNNFAMSTKIDKQVSYPAFLRMRYNFNQDDVDYQLYSVVCHKGTLDTGHYIAYTYYQNQWFLLDDTTIVEVKESEVLNSQAYLLFYHERQILYSDEMTVKTEN.

The UBP-type zinc-finger motif lies at 6–113; the sequence is EGCQHLKLKP…FKIKNIKAWQ (108 aa). Cysteine 8, histidine 10, cysteine 38, cysteine 41, cysteine 51, cysteine 54, cysteine 59, histidine 64, histidine 68, histidine 74, cysteine 87, and cysteine 90 together coordinate Zn(2+). The 291-residue stretch at 145-435 folds into the USP domain; the sequence is RGIQNLGATC…QAYLLFYHER (291 aa). Cysteine 154 serves as the catalytic Nucleophile. Zn(2+) is bound by residues histidine 178, cysteine 183, cysteine 188, cysteine 191, histidine 246, cysteine 257, cysteine 259, histidine 262, cysteine 275, cysteine 278, cysteine 317, and cysteine 320. Histidine 395 functions as the Proton acceptor in the catalytic mechanism.

The protein belongs to the peptidase C19 family. UBP8 subfamily. Component of the 1.8 MDa SAGA (Spt-Ada-Gcn5 acetyltransferase) complex, which is composed of 19 subunits tra1, spt7, taf5, ngg1/ada3, sgf73, spt20, spt8, taf12, taf6, hfi1/ada1, ubp8, gcn5, ada2, spt3, sgf29, taf10, taf9, sgf11 and sus1. The SAGA complex is composed of 4 modules, namely the HAT (histone acetyltransferase) module (gcn5, ada2, ngg1/ada3 and sgf29), the DUB (deubiquitinating) module (ubp8, sgf11, sgf73 and sus1), the core or TAF (TBP-associated factor) module (taf5, taf6, taf9, taf10 and taf12), and the Tra1 or SPT (Suppressor of Ty) module (tra1, hfi1/ada1, spt3, spt7, spt8 and spt20). The Tra1/SPT module binds activators, the core module recruits TBP (TATA-binding protein), the HAT module contains the histone H3 acetyltransferase gcn5, and the DUB module comprises the histone H2B deubiquitinase ubp8.

Its subcellular location is the nucleus. It localises to the nucleoplasm. The catalysed reaction is Thiol-dependent hydrolysis of ester, thioester, amide, peptide and isopeptide bonds formed by the C-terminal Gly of ubiquitin (a 76-residue protein attached to proteins as an intracellular targeting signal).. Histone deubiquitinating enzyme component of the transcription coactivator SAGA complex. SAGA acts as a general cofactor required for essentially all RNA polymerase II transcription. At the promoters, SAGA is required for transcription pre-initiation complex (PIC) recruitment. It influences RNA polymerase II transcriptional activity through different activities such as TBP interaction (via core/TAF module) and promoter selectivity, interaction with transcription activators (via Tra1/SPT module), and chromatin modification through histone acetylation (via HAT module) and deubiquitination (via DUB module). SAGA preferentially acetylates histones H3 (to form H3K9ac, H3K14ac, H3K18ac and H3K23ac) and H2B and deubiquitinates histone H2B. SAGA interacts with DNA via upstream activating sequences (UASs). Within the DUB module, the correctly positioned zinc finger domains of sgf11 and sgf73 are both required to fully activate the ubiquitin hydrolase ubp8. The DUB module is also linked to the splicing efficiency of many transcripts. This Schizosaccharomyces pombe (strain 972 / ATCC 24843) (Fission yeast) protein is Probable ubiquitin carboxyl-terminal hydrolase 8 (ubp8).